The sequence spans 187 residues: GTP cyclohydrolase 1 (187 aa).

Zn(2+) is bound by residues C76, H79, and C148.

The protein belongs to the GTP cyclohydrolase I family. As to quaternary structure, toroid-shaped homodecamer, composed of two pentamers of five dimers.

It catalyses the reaction GTP + H2O = 7,8-dihydroneopterin 3'-triphosphate + formate + H(+). Its pathway is cofactor biosynthesis; 7,8-dihydroneopterin triphosphate biosynthesis; 7,8-dihydroneopterin triphosphate from GTP: step 1/1. The polypeptide is GTP cyclohydrolase 1 (Streptococcus thermophilus (strain CNRZ 1066)).